The following is a 1365-amino-acid chain: Glucosyltransferase-S (1365 aa).

Positions M1–A36 form a signal peptide, or 37. Polar residues-rich tracts occupy residues D80–P89 and R127–Q146. Disordered stretches follow at residues D80–V99 and R127–T152. Cell wall-binding repeat units follow at residues Q146–R166 and K168–E187. The tract at residues Q200–T1000 is catalytic; approximate. 10 Cell wall-binding repeats span residues A1052 to E1071, K1073 to M1092, A1093 to Q1112, L1113 to T1133, N1136 to I1159, A1160 to Q1179, L1234 to Q1253, G1278 to V1298, L1299 to Q1318, and R1343 to A1362.

It belongs to the glycosyl hydrolase 70 family.

The enzyme catalyses [(1-&gt;6)-alpha-D-glucosyl](n) + sucrose = [(1-&gt;6)-alpha-D-glucosyl](n+1) + D-fructose. With respect to regulation, glucan synthesis by GTF-S is independent of primer glucan unlike GTF-I. Functionally, production of extracellular glucans, that are thought to play a key role in the development of the dental plaque because of their ability to adhere to smooth surfaces and mediate the aggregation of bacterial cells and food debris. This is Glucosyltransferase-S (gtfS) from Streptococcus downei (Streptococcus sobrinus).